Here is a 304-residue protein sequence, read N- to C-terminus: Acetyl-coenzyme A carboxylase carboxyl transferase subunit beta (304 aa).

A CoA carboxyltransferase N-terminal domain is found at 23–292 (VWTKCDSCGQ…PNPEAPREGV (270 aa)). Residues Cys27, Cys30, Cys46, and Cys49 each contribute to the Zn(2+) site. Residues 27-49 (CDSCGQVLYRAELERNLEVCPKC) form a C4-type zinc finger. A disordered region spans residues 284 to 304 (NPEAPREGVVVPPVPDQEPEA). Positions 295–304 (PPVPDQEPEA) are enriched in pro residues.

The protein belongs to the AccD/PCCB family. Acetyl-CoA carboxylase is a heterohexamer composed of biotin carboxyl carrier protein (AccB), biotin carboxylase (AccC) and two subunits each of ACCase subunit alpha (AccA) and ACCase subunit beta (AccD). Zn(2+) serves as cofactor.

The protein localises to the cytoplasm. The catalysed reaction is N(6)-carboxybiotinyl-L-lysyl-[protein] + acetyl-CoA = N(6)-biotinyl-L-lysyl-[protein] + malonyl-CoA. Its pathway is lipid metabolism; malonyl-CoA biosynthesis; malonyl-CoA from acetyl-CoA: step 1/1. Component of the acetyl coenzyme A carboxylase (ACC) complex. Biotin carboxylase (BC) catalyzes the carboxylation of biotin on its carrier protein (BCCP) and then the CO(2) group is transferred by the transcarboxylase to acetyl-CoA to form malonyl-CoA. This chain is Acetyl-coenzyme A carboxylase carboxyl transferase subunit beta, found in Escherichia coli O139:H28 (strain E24377A / ETEC).